The sequence spans 368 residues: Chaperone protein DnaJ (368 aa).

The region spanning 5 to 70 (DYYQVLGVPR…KKRKLYDTHG (66 aa)) is the J domain. A CR-type zinc finger spans residues 124–201 (GVERQIQIPT…CNGAGRVEDH (78 aa)). Zn(2+) contacts are provided by cysteine 137, cysteine 140, cysteine 153, cysteine 156, cysteine 175, cysteine 178, cysteine 189, and cysteine 192. 4 CXXCXGXG motif repeats span residues 137 to 144 (CTHCHGSG), 153 to 160 (CGTCRGSG), 175 to 182 (CPHCGGRG), and 189 to 196 (CKVCNGAG).

The protein belongs to the DnaJ family. In terms of assembly, homodimer. Zn(2+) is required as a cofactor.

The protein resides in the cytoplasm. Participates actively in the response to hyperosmotic and heat shock by preventing the aggregation of stress-denatured proteins and by disaggregating proteins, also in an autonomous, DnaK-independent fashion. Unfolded proteins bind initially to DnaJ; upon interaction with the DnaJ-bound protein, DnaK hydrolyzes its bound ATP, resulting in the formation of a stable complex. GrpE releases ADP from DnaK; ATP binding to DnaK triggers the release of the substrate protein, thus completing the reaction cycle. Several rounds of ATP-dependent interactions between DnaJ, DnaK and GrpE are required for fully efficient folding. Also involved, together with DnaK and GrpE, in the DNA replication of plasmids through activation of initiation proteins. In Xylella fastidiosa (strain 9a5c), this protein is Chaperone protein DnaJ.